Reading from the N-terminus, the 233-residue chain is Ribosome maturation protein SDO1 homolog (233 aa).

This sequence belongs to the SDO1/SBDS family.

This chain is Ribosome maturation protein SDO1 homolog, found in Aeropyrum pernix (strain ATCC 700893 / DSM 11879 / JCM 9820 / NBRC 100138 / K1).